Consider the following 131-residue polypeptide: D-ribose pyranase (131 aa).

The active-site Proton donor is the His-20. Substrate is bound by residues Asp-28, His-98, and 120-122 (YSN).

The protein belongs to the RbsD / FucU family. RbsD subfamily. Homodecamer.

It localises to the cytoplasm. The enzyme catalyses beta-D-ribopyranose = beta-D-ribofuranose. Its pathway is carbohydrate metabolism; D-ribose degradation; D-ribose 5-phosphate from beta-D-ribopyranose: step 1/2. Its function is as follows. Catalyzes the interconversion of beta-pyran and beta-furan forms of D-ribose. The protein is D-ribose pyranase of Limosilactobacillus fermentum (strain NBRC 3956 / LMG 18251) (Lactobacillus fermentum).